A 192-amino-acid chain; its full sequence is Fe/S biogenesis protein NfuA (192 aa).

[4Fe-4S] cluster is bound by residues Cys149 and Cys152.

Belongs to the NfuA family. Homodimer. The cofactor is [4Fe-4S] cluster.

Its function is as follows. Involved in iron-sulfur cluster biogenesis. Binds a 4Fe-4S cluster, can transfer this cluster to apoproteins, and thereby intervenes in the maturation of Fe/S proteins. Could also act as a scaffold/chaperone for damaged Fe/S proteins. The polypeptide is Fe/S biogenesis protein NfuA (Idiomarina loihiensis (strain ATCC BAA-735 / DSM 15497 / L2-TR)).